A 420-amino-acid chain; its full sequence is Glutamyl-tRNA reductase (420 aa).

Residues 49-52 (TCNR), Ser-109, 114-116 (EPQ), and Gln-120 contribute to the substrate site. The Nucleophile role is filled by Cys-50. 189–194 (GAGETI) is a binding site for NADP(+).

It belongs to the glutamyl-tRNA reductase family. Homodimer.

It carries out the reaction (S)-4-amino-5-oxopentanoate + tRNA(Glu) + NADP(+) = L-glutamyl-tRNA(Glu) + NADPH + H(+). It participates in porphyrin-containing compound metabolism; protoporphyrin-IX biosynthesis; 5-aminolevulinate from L-glutamyl-tRNA(Glu): step 1/2. Functionally, catalyzes the NADPH-dependent reduction of glutamyl-tRNA(Glu) to glutamate 1-semialdehyde (GSA). This is Glutamyl-tRNA reductase from Yersinia pseudotuberculosis serotype O:1b (strain IP 31758).